The primary structure comprises 131 residues: D-ribose pyranase (131 aa).

His-20 serves as the catalytic Proton donor. Residues Asp-28, His-98, and 120–122 (YAN) contribute to the substrate site.

Belongs to the RbsD / FucU family. RbsD subfamily. As to quaternary structure, homodecamer.

The protein localises to the cytoplasm. It carries out the reaction beta-D-ribopyranose = beta-D-ribofuranose. The protein operates within carbohydrate metabolism; D-ribose degradation; D-ribose 5-phosphate from beta-D-ribopyranose: step 1/2. In terms of biological role, catalyzes the interconversion of beta-pyran and beta-furan forms of D-ribose. The protein is D-ribose pyranase of Bacillus cereus (strain AH187).